The sequence spans 383 residues: Interleukin-13 receptor subunit alpha-2 (383 aa).

Residues 1 to 21 (MAFVHIRCLCFILLCTITGYS) form the signal peptide. Residues 22-334 (LEIKVNPPQD…WEGYTGPDSK (313 aa)) lie on the Extracellular side of the membrane. Fibronectin type-III domains follow at residues 28-128 (PPQD…SDEG), 131-219 (ETKI…PIRS), and 234-332 (PPEF…TGPD). A disulfide bridge connects residues Cys59 and Cys107. Asn109 is a glycosylation site (N-linked (GlcNAc...) asparagine). Cys139 and Cys149 form a disulfide bridge. The N-linked (GlcNAc...) asparagine glycan is linked to Asn162. Cys178 and Cys191 are disulfide-bonded. N-linked (GlcNAc...) asparagine glycans are attached at residues Asn209 and Asn293. A disulfide bridge connects residues Cys263 and Cys310. The WSXWS motif motif lies at 316–320 (WSEWS). The helical transmembrane segment at 335–355 (IIFIVPVCLFFIFLLLLLCLI) threads the bilayer. At 356 to 383 (VEKEEPEPTLSLHVDLNKEVCAYEDTLC) the chain is on the cytoplasmic side.

The protein belongs to the type I cytokine receptor family. Type 5 subfamily. As to quaternary structure, interacts with IL4RA. Interacts with high affinity to interleukin-13 (IL13), but not to interleukin-4 (IL4). Cleaved by MMP8 leading to a soluble form that is also able to interact with IL13.

The protein resides in the cell membrane. The protein localises to the secreted. Cell surface receptor that plays a role in the regulation of IL-13-mediated responses. Functions as a decoy receptor that inhibits IL-13- and IL-4-mediated signal transduction via the JAK-STAT pathway and thereby modulates immune responses and inflammation. Serves as a functional signaling receptor for IL-13 in an alternative pathway involving AP-1 ultimately leading to the production of TGFB1. This chain is Interleukin-13 receptor subunit alpha-2 (Il13ra2), found in Mus musculus (Mouse).